The chain runs to 610 residues: Zinc metalloproteinase-disintegrin-like brevilysin H6 (610 aa).

A signal peptide spans 1–20 (MIQVLLVTICLAAFPYQGSS). The propeptide occupies 21–191 (IILESGNVND…ASQLNLTPEQ (171 aa)). Pyrrolidone carboxylic acid is present on Gln192. In terms of domain architecture, Peptidase M12B spans 198 to 394 (RFVELVLVAD…HNPECIVNEP (197 aa)). Residues Glu201 and Asp285 each coordinate Ca(2+). 4 cysteine pairs are disulfide-bonded: Cys309/Cys389, Cys349/Cys373, Cys351/Cys356, and Cys373/Cys378. His334 lines the Zn(2+) pocket. Glu335 is a catalytic residue. Zn(2+) contacts are provided by His338 and His344. Residue Asn372 is glycosylated (N-linked (GlcNAc...) asparagine). Cys389, Asn392, Val404, Asn407, Leu409, Glu411, Glu414, and Asp417 together coordinate Ca(2+). A Disintegrin domain is found at 402–488 (PPVCGNELLE…ECPADVFHKN (87 aa)). Cystine bridges form between Cys405-Cys424, Cys405-Cys434, Cys416-Cys429, Cys416-Cys434, Cys418-Cys424, Cys428-Cys451, Cys442-Cys448, Cys447-Cys473, Cys460-Cys480, Cys467-Cys492, Cys467-Cys499, Cys492-Cys504, Cys499-Cys504, Cys511-Cys526, Cys511-Cys561, Cys526-Cys572, Cys539-Cys549, Cys549-Cys556, Cys556-Cys598, Cys561-Cys572, Cys592-Cys603, and Cys598-Cys603. The D/ECD-tripeptide signature appears at 466–468 (ECD). 5 residues coordinate Ca(2+): Asp468, Pro469, Glu471, Asp483, and Val484.

The protein belongs to the venom metalloproteinase (M12B) family. P-III subfamily. P-IIIb sub-subfamily. As to quaternary structure, monomer. Zn(2+) is required as a cofactor. In the absence of calcium ions, is autocatalytically degraded giving 29 (p29K) and 45 kDa (p45K) fragments. In presence of calcium ions, the p45K is not detected. Expressed by the venom gland.

The protein localises to the secreted. Its activity is regulated as follows. Inhibited by chelating agents. Calcium ions enhance its activity, they also suppress autoproteolysis, and contribute to the stability of the enzyme against pH, heating, urea and cysteine. Shows weak hemorrhagic activity. Rapidly degrades the alpha-chain of fibrinogen (FGA). The chain is Zinc metalloproteinase-disintegrin-like brevilysin H6 from Gloydius brevicauda (Korean slamosa snake).